Here is a 257-residue protein sequence, read N- to C-terminus: Golgi SNAP receptor complex member 1-2 (257 aa).

Over 1–235 (MTESSLDLQE…GSIKRKRSRD (235 aa)) the chain is Cytoplasmic. Position 51 is a phosphoserine (N51). Residues 113-147 (TQKLARHRDILHEYTQEFRRIKGNINSLREHAELL) adopt a coiled-coil conformation. Residues 236-256 (TLILSAVIAACTLFLIIYWLS) traverse the membrane as a helical; Anchor for type IV membrane protein segment. A topological domain (vesicular) is located at residue K257.

Belongs to the GOSR1 family. Component of several multiprotein Golgi SNARE complexes.

The protein resides in the golgi apparatus membrane. The protein localises to the endoplasmic reticulum membrane. Its function is as follows. Involved in transport from the ER to the Golgi apparatus as well as in intra-Golgi transport. It belongs to a super-family of proteins called t-SNAREs or soluble NSF (N-ethylmaleimide-sensitive factor) attachment protein receptor. This Arabidopsis thaliana (Mouse-ear cress) protein is Golgi SNAP receptor complex member 1-2 (GOS12).